Consider the following 361-residue polypeptide: Geranylgeranyl pyrophosphate synthase 3 (361 aa).

A disordered region spans residues Asp-44–Pro-63. Lys-81, Arg-84, and His-113 together coordinate isopentenyl diphosphate. Asp-120 and Asp-124 together coordinate Mg(2+). Arg-129 contributes to the dimethylallyl diphosphate binding site. Isopentenyl diphosphate is bound at residue Arg-130. Positions 207, 208, and 244 each coordinate dimethylallyl diphosphate. Mg(2+) is bound at residue Asp-247. Residues Asn-251, Lys-261, and Lys-271 each coordinate dimethylallyl diphosphate.

It belongs to the FPP/GGPP synthase family. The cofactor is Mg(2+).

The catalysed reaction is isopentenyl diphosphate + dimethylallyl diphosphate = (2E)-geranyl diphosphate + diphosphate. It carries out the reaction isopentenyl diphosphate + (2E)-geranyl diphosphate = (2E,6E)-farnesyl diphosphate + diphosphate. The enzyme catalyses isopentenyl diphosphate + (2E,6E)-farnesyl diphosphate = (2E,6E,10E)-geranylgeranyl diphosphate + diphosphate. In terms of biological role, geranylgeranyl pyrophosphate synthase; part of the gene cluster 25 that mediates the biosynthesis of an isoprenoid secondary metabolite. This chain is Geranylgeranyl pyrophosphate synthase 3 (GGS3), found in Zymoseptoria tritici (strain CBS 115943 / IPO323) (Speckled leaf blotch fungus).